Reading from the N-terminus, the 356-residue chain is tRNA N6-adenosine threonylcarbamoyltransferase (356 aa).

Residues His-116 and His-120 each contribute to the Fe cation site. Substrate contacts are provided by residues 139-143 (IVSGG), Asp-174, Gly-187, Asp-191, and Asn-281. Asp-309 lines the Fe cation pocket.

The protein belongs to the KAE1 / TsaD family. It depends on Fe(2+) as a cofactor.

It localises to the cytoplasm. It catalyses the reaction L-threonylcarbamoyladenylate + adenosine(37) in tRNA = N(6)-L-threonylcarbamoyladenosine(37) in tRNA + AMP + H(+). Required for the formation of a threonylcarbamoyl group on adenosine at position 37 (t(6)A37) in tRNAs that read codons beginning with adenine. Is involved in the transfer of the threonylcarbamoyl moiety of threonylcarbamoyl-AMP (TC-AMP) to the N6 group of A37, together with TsaE and TsaB. TsaD likely plays a direct catalytic role in this reaction. This Frankia alni (strain DSM 45986 / CECT 9034 / ACN14a) protein is tRNA N6-adenosine threonylcarbamoyltransferase.